The following is a 608-amino-acid chain: MHGLLLAAAGLLSLPLHVIAHPQPSTNLAGRGVDLDAYRMADRSSYMNSDDMKLKQPGIASLSGGNYVDTATEVVKRMVPGMTFRMVDDHYVGESGISHVYFRQTMHGMDIDNSDFNVNIGKDGKVLSFGHSFYTGPAPDKAPVEKRDFSDPMKAFHGACKALNLPINADKATVQTMNEHEVMFMGTSGAMSDPQGKLCYMAKEDGTLALTWRVETDMGDNWLLSYVDAKETEKVHNVVDYVSHATYQVYRWPIPDPTEGKRETIENPWNLKTSPFTWISDGKTNYTTTRGNNAIAQANFDGGEDYLNNHRPNNKNLKFEYPYAPNMSPKSYIDASVTQLFYSANMVHDLYYMLGFTEKAGNFQVNNHGQGGKGNDFVILNAQDGSGTNNANFATPPDGKPGRMRVYIWTKAKPARDSSFEAGTVIHEYTHGLSNRLTGGPANAGCLNGMESGGMGEGWGDFFATAIRLKPNDNRNANYVHGEWVNNSPKGNRMYPYSTSLQTNPLVYTSCNKYNEVHAIGTVWGSMLYEVLWNLIDKHGKNDGPTPVFENGVPKDGKYLAMKLVMDGMAIQPCKPTFVQARDAIIDADMNLTKGSNRCEIWKAFAKR.

An N-terminal signal peptide occupies residues M1 to A20. Positions H21 to H244 are excised as a propeptide. A glycan (N-linked (GlcNAc...) asparagine) is linked at N285. H427 is a binding site for Zn(2+). E428 is a catalytic residue. H431 lines the Zn(2+) pocket. N591 carries N-linked (GlcNAc...) asparagine glycosylation.

It belongs to the peptidase M36 family. Zn(2+) serves as cofactor.

It localises to the secreted. Secreted metalloproteinase probably acting as a virulence factor. This chain is Extracellular metalloproteinase 5 (MEP5), found in Trichophyton tonsurans (Scalp ringworm fungus).